Here is a 551-residue protein sequence, read N- to C-terminus: Chaperonin GroEL 4 (551 aa).

ATP is bound by residues 30-33, Lys-51, 87-91, Gly-415, and Asp-495; these read TLGP and DGTTT.

This sequence belongs to the chaperonin (HSP60) family. Forms a cylinder of 14 subunits composed of two heptameric rings stacked back-to-back. Interacts with the co-chaperonin GroES.

The protein resides in the cytoplasm. It catalyses the reaction ATP + H2O + a folded polypeptide = ADP + phosphate + an unfolded polypeptide.. Functionally, together with its co-chaperonin GroES, plays an essential role in assisting protein folding. The GroEL-GroES system forms a nano-cage that allows encapsulation of the non-native substrate proteins and provides a physical environment optimized to promote and accelerate protein folding. The polypeptide is Chaperonin GroEL 4 (Mesorhizobium japonicum (strain LMG 29417 / CECT 9101 / MAFF 303099) (Mesorhizobium loti (strain MAFF 303099))).